A 205-amino-acid polypeptide reads, in one-letter code: Sarcosine oxidase subunit gamma (205 aa).

This sequence belongs to the SoxG family. As to quaternary structure, heterotetramer composed of subunits alpha (SoxA), beta (SoxB), gamma (SoxG) and delta (SoxD).

It is found in the cytoplasm. It carries out the reaction sarcosine + (6S)-5,6,7,8-tetrahydrofolate + O2 = (6R)-5,10-methylene-5,6,7,8-tetrahydrofolate + glycine + H2O2. It catalyses the reaction sarcosine + O2 + H2O = formaldehyde + glycine + H2O2. With respect to regulation, inhibited by Zn(2+), Cu(2+), Cd(2+), Hg(2+), Ag(+), p-chloromercuribenzoate (p-CMB), iodoacetamide, N-ethylmaleimide, CN(-), o-phenanthroline and sodium lauryl sulfate. Its function is as follows. In the presence of tetrahydrofolate, catalyzes the oxidative demethylation of sarcosine to yield glycine, 5,10-methylenetetrahydrofolate and hydrogen peroxide. In the absence of tetrahydrofolate, catalyzes the oxidative demethylation of sarcosine to yield glycine, formaldehyde and hydrogen peroxide. Can also use N-methyl-L-alanine and N-ethyl-L-glycine. Is very specific for oxygen as an acceptor. This Corynebacterium sp. (strain U-96) protein is Sarcosine oxidase subunit gamma.